The chain runs to 428 residues: Gamma-glutamyl phosphate reductase (428 aa).

It belongs to the gamma-glutamyl phosphate reductase family.

It is found in the cytoplasm. It catalyses the reaction L-glutamate 5-semialdehyde + phosphate + NADP(+) = L-glutamyl 5-phosphate + NADPH + H(+). It participates in amino-acid biosynthesis; L-proline biosynthesis; L-glutamate 5-semialdehyde from L-glutamate: step 2/2. In terms of biological role, catalyzes the NADPH-dependent reduction of L-glutamate 5-phosphate into L-glutamate 5-semialdehyde and phosphate. The product spontaneously undergoes cyclization to form 1-pyrroline-5-carboxylate. The chain is Gamma-glutamyl phosphate reductase from Treponema pallidum (strain Nichols).